The following is a 265-amino-acid chain: GTP cyclohydrolase 1 type 2 homolog (265 aa).

4 residues coordinate a divalent metal cation: His-65, Asp-103, His-225, and Glu-228.

It belongs to the GTP cyclohydrolase I type 2/NIF3 family. In terms of assembly, homohexamer.

The chain is GTP cyclohydrolase 1 type 2 homolog from Streptococcus pneumoniae serotype 4 (strain ATCC BAA-334 / TIGR4).